The primary structure comprises 100 residues: Small ribosomal subunit protein uS14c (100 aa).

This sequence belongs to the universal ribosomal protein uS14 family. As to quaternary structure, part of the 30S ribosomal subunit.

It is found in the plastid. The protein resides in the chloroplast. Binds 16S rRNA, required for the assembly of 30S particles. The polypeptide is Small ribosomal subunit protein uS14c (Chara vulgaris (Common stonewort)).